We begin with the raw amino-acid sequence, 1604 residues long: Ubiquitin carboxyl-terminal hydrolase 32 (1604 aa).

3 consecutive EF-hand domains span residues 91-126 (KDEEKAKYIFSLFSSESGNYVIREEMERMLHVVDGK), 228-263 (IRPSLSEGLFNAFDENRDNHIDFKEISCGLSACCRG), and 264-299 (PLAERQKFCFKVFDVDRDGVLSRVELRDMVVALLEV). Ca(2+) contacts are provided by D241, N243, D245, H247, E252, D277, D279, D281, and E288. The 217-residue stretch at 369–585 (ATPEEEGQII…ANLALPRPVI (217 aa)) folds into the DUSP domain. One can recognise a USP domain in the interval 734-1567 (TGLSNLGNTC…SAYILFYEQQ (834 aa)). Catalysis depends on C743, which acts as the Nucleophile. A Phosphotyrosine modification is found at Y1173. Disordered stretches follow at residues 1343 to 1362 (KKVDAQSSAGEEDVLLSKSP) and 1367 to 1431 (ANII…DASK). Phosphoserine occurs at positions 1350, 1372, 1376, and 1454. Low complexity predominate over residues 1367–1399 (ANIISSPKGSPSSSRKSGTSCPSSKNSSPNSSP). H1526 functions as the Proton acceptor in the catalytic mechanism. S1588 carries the phosphoserine modification. C1601 is subject to Cysteine methyl ester. A lipid anchor (S-farnesyl cysteine) is attached at C1601. The propeptide at 1602–1604 (VLQ) is removed in mature form.

Belongs to the peptidase C19 family.

It localises to the golgi apparatus membrane. It catalyses the reaction Thiol-dependent hydrolysis of ester, thioester, amide, peptide and isopeptide bonds formed by the C-terminal Gly of ubiquitin (a 76-residue protein attached to proteins as an intracellular targeting signal).. Functionally, deubiquitinase that can remove conjugated ubiquitin from target proteins, such as RAB7A and LAMTOR1. Acts as a positive regulator of the mTORC1 signaling by mediating deubiquitination of LAMTOR1, thereby promoting the association between LAMTOR1 and the lysosomal V-ATPase complex and subsequent activation of the mTORC1 complex. The chain is Ubiquitin carboxyl-terminal hydrolase 32 (USP32) from Homo sapiens (Human).